A 217-amino-acid polypeptide reads, in one-letter code: Large ribosomal subunit protein uL1 (217 aa).

The protein belongs to the universal ribosomal protein uL1 family.

This Drosophila melanogaster (Fruit fly) protein is Large ribosomal subunit protein uL1 (RpL10Ab).